The sequence spans 525 residues: GMP synthase [glutamine-hydrolyzing] (525 aa).

In terms of domain architecture, Glutamine amidotransferase type-1 spans 9–207 (RILILDFGSQ…VRDICQCEAL (199 aa)). Cys-86 acts as the Nucleophile in catalysis. Catalysis depends on residues His-181 and Glu-183. One can recognise a GMPS ATP-PPase domain in the interval 208–400 (WTPAKIIDDA…LGLPYDMLYR (193 aa)). 235–241 (SGGVDSS) lines the ATP pocket.

As to quaternary structure, homodimer.

The enzyme catalyses XMP + L-glutamine + ATP + H2O = GMP + L-glutamate + AMP + diphosphate + 2 H(+). The protein operates within purine metabolism; GMP biosynthesis; GMP from XMP (L-Gln route): step 1/1. Its function is as follows. Catalyzes the synthesis of GMP from XMP. This is GMP synthase [glutamine-hydrolyzing] from Shigella flexneri serotype 5b (strain 8401).